The chain runs to 184 residues: Photosystem I assembly protein Ycf4 (184 aa).

The next 2 membrane-spanning stretches (helical) occupy residues 21-43 (NFCW…FSSY) and 58-80 (LFIP…SFYL).

This sequence belongs to the Ycf4 family.

The protein localises to the plastid. It localises to the chloroplast thylakoid membrane. Seems to be required for the assembly of the photosystem I complex. The polypeptide is Photosystem I assembly protein Ycf4 (Marchantia polymorpha (Common liverwort)).